The primary structure comprises 358 residues: Putative spore germination protein YfkT (358 aa).

10 helical membrane passes run 10-30, 36-56, 81-101, 107-127, 143-163, 179-199, 210-230, 262-282, 297-317, and 326-346; these read LFFGALYTLAVGLKHAPILMI, NAWHSYILGVVIVIPALWLMH, IIILLFSLYFLLINAHDIRFF, ILFLPRTPMAVLGGVIIFVAI, IFLFPFGILVLFLPFTLATQI, LQSGYYAFGTMGELIILPLLF, IFAILLGALLLAVMLFSSISV, IIAAFWIPVIMVKIAGSLYIV, AMYTPTGMFSVVCGFWFFLNT, and IKPIINVVISLLLPLLIYLII.

The protein belongs to the amino acid-polyamine-organocation (APC) superfamily. Spore germination protein (SGP) (TC 2.A.3.9) family.

The protein resides in the cell membrane. May be involved in spore germination. This Bacillus subtilis (strain 168) protein is Putative spore germination protein YfkT (yfkT).